Reading from the N-terminus, the 310-residue chain is Putative HTH-type transcriptional regulatory protein M1425_1284 (310 aa).

The 56-residue stretch at 125-180 (LKHKREEMGYSIGDVAKFLGVSRKAIYDYEKGDSDVSLEVAEKLIDLFGDDIIGDV) folds into the HTH cro/C1-type domain. The H-T-H motif DNA-binding region spans 136–155 (IGDVAKFLGVSRKAIYDYEK).

The protein is Putative HTH-type transcriptional regulatory protein M1425_1284 of Saccharolobus islandicus (strain M.14.25 / Kamchatka #1) (Sulfolobus islandicus).